The chain runs to 125 residues: Succinate dehydrogenase cytochrome b556 subunit (125 aa).

Residues 1 to 22 lie on the Cytoplasmic side of the membrane; it reads MNAKRPVNLDLTKFHFPPMAIL. A helical membrane pass occupies residues 23–48; sequence SIGHRISGFVLFLCMPLMFYLLHRAT. The Periplasmic portion of the chain corresponds to 49–65; that stretch reads ASAESFYHLHQLLLHNG. Residues 66 to 86 traverse the membrane as a helical segment; it reads WIKLAVWIMLSATLFHLFAGI. H81 lines the heme pocket. At 87-104 the chain is on the cytoplasmic side; the sequence is RHLAMDLGFWESVPEGRI. Residues 105-125 form a helical membrane-spanning segment; that stretch reads SAYTVFVVSFIAIVLAGVWIW.

This sequence belongs to the cytochrome b560 family. Part of an enzyme complex containing four subunits: a flavoprotein, an iron-sulfur protein, plus two membrane-anchoring proteins, SdhC and SdhD. The complex can form homotrimers. The cofactor is heme.

It is found in the cell inner membrane. It functions in the pathway carbohydrate metabolism; tricarboxylic acid cycle. Its function is as follows. Membrane-anchoring subunit of succinate dehydrogenase (SDH). The chain is Succinate dehydrogenase cytochrome b556 subunit (sdhC) from Coxiella burnetii (strain RSA 493 / Nine Mile phase I).